The sequence spans 138 residues: ATP synthase epsilon chain (138 aa).

The protein belongs to the ATPase epsilon chain family. In terms of assembly, F-type ATPases have 2 components, CF(1) - the catalytic core - and CF(0) - the membrane proton channel. CF(1) has five subunits: alpha(3), beta(3), gamma(1), delta(1), epsilon(1). CF(0) has three main subunits: a, b and c.

It localises to the cellular thylakoid membrane. Its function is as follows. Produces ATP from ADP in the presence of a proton gradient across the membrane. In Cyanothece sp. (strain PCC 7425 / ATCC 29141), this protein is ATP synthase epsilon chain.